The following is a 730-amino-acid chain: Ribosomal RNA large subunit methyltransferase K/L (730 aa).

In terms of domain architecture, THUMP spans 46–157 (TAYRLCVWSR…RGEAILSLDL (112 aa)). A disordered region spans residues 394–418 (GERREAQPEGTEARQQVPQASEPAR).

The protein belongs to the methyltransferase superfamily. RlmKL family.

It is found in the cytoplasm. The enzyme catalyses guanosine(2445) in 23S rRNA + S-adenosyl-L-methionine = N(2)-methylguanosine(2445) in 23S rRNA + S-adenosyl-L-homocysteine + H(+). The catalysed reaction is guanosine(2069) in 23S rRNA + S-adenosyl-L-methionine = N(2)-methylguanosine(2069) in 23S rRNA + S-adenosyl-L-homocysteine + H(+). In terms of biological role, specifically methylates the guanine in position 2445 (m2G2445) and the guanine in position 2069 (m7G2069) of 23S rRNA. The chain is Ribosomal RNA large subunit methyltransferase K/L from Pseudomonas putida (strain ATCC 700007 / DSM 6899 / JCM 31910 / BCRC 17059 / LMG 24140 / F1).